The sequence spans 290 residues: Arylamine N-acetyltransferase 2 (290 aa).

The active-site Acyl-thioester intermediate is C68. Positions 103 and 104 each coordinate CoA. 106 to 107 lines the substrate pocket; sequence IH. Residues H107 and D122 contribute to the active site. Residue Y208 participates in CoA binding.

The protein belongs to the arylamine N-acetyltransferase family.

It is found in the cytoplasm. The enzyme catalyses an arylamine + acetyl-CoA = an N-acetylarylamine + CoA. It carries out the reaction an N-hydroxyarylamine + acetyl-CoA = an N-acetoxyarylamine + CoA. Its function is as follows. Catalyzes the N- or O-acetylation of various arylamine and heterocyclic amine substrates, and participates in the detoxification of a plethora of hydrazine and arylamine drugs. In Mesocricetus auratus (Golden hamster), this protein is Arylamine N-acetyltransferase 2 (NAT2).